The chain runs to 119 residues: uncharacterized protein (119 aa).

This is an uncharacterized protein from Schizosaccharomyces pombe (strain 972 / ATCC 24843) (Fission yeast).